The primary structure comprises 490 residues: Betaine aldehyde dehydrogenase (490 aa).

Asn93 contributes to the K(+) binding site. NAD(+) is bound at residue 150-152 (GAW). Lys162 (charge relay system) is an active-site residue. NAD(+) is bound at residue 176 to 179 (KPSE). Val180 contacts K(+). Residue 230–233 (GTAT) participates in NAD(+) binding. Leu246 serves as a coordination point for K(+). The active-site Proton acceptor is the Glu252. Residues Gly254, Cys286, and Glu387 each contribute to the NAD(+) site. The active-site Nucleophile is Cys286. Cys286 is subject to Cysteine sulfenic acid (-SOH). Positions 457 and 460 each coordinate K(+). The active-site Charge relay system is Glu464.

Belongs to the aldehyde dehydrogenase family. As to quaternary structure, dimer of dimers. K(+) is required as a cofactor.

It carries out the reaction betaine aldehyde + NAD(+) + H2O = glycine betaine + NADH + 2 H(+). It functions in the pathway amine and polyamine biosynthesis; betaine biosynthesis via choline pathway; betaine from betaine aldehyde: step 1/1. Its function is as follows. Involved in the biosynthesis of the osmoprotectant glycine betaine. Catalyzes the irreversible oxidation of betaine aldehyde to the corresponding acid. In Xanthomonas euvesicatoria pv. vesicatoria (strain 85-10) (Xanthomonas campestris pv. vesicatoria), this protein is Betaine aldehyde dehydrogenase.